Reading from the N-terminus, the 77-residue chain is Translation initiation factor IF-1, chloroplastic (77 aa).

An S1-like domain is found at M1–R71.

Belongs to the IF-1 family. In terms of assembly, component of the 30S ribosomal translation pre-initiation complex which assembles on the 30S ribosome in the order IF-2 and IF-3, IF-1 and N-formylmethionyl-tRNA(fMet); mRNA recruitment can occur at any time during PIC assembly.

The protein resides in the plastid. It localises to the chloroplast. One of the essential components for the initiation of protein synthesis. Stabilizes the binding of IF-2 and IF-3 on the 30S subunit to which N-formylmethionyl-tRNA(fMet) subsequently binds. Helps modulate mRNA selection, yielding the 30S pre-initiation complex (PIC). Upon addition of the 50S ribosomal subunit IF-1, IF-2 and IF-3 are released leaving the mature 70S translation initiation complex. The chain is Translation initiation factor IF-1, chloroplastic from Acorus calamus var. americanus (American sweet flag).